A 701-amino-acid chain; its full sequence is Elongation factor G 1 (701 aa).

In terms of domain architecture, tr-type G spans 8-290 (VRYRNIGICA…AVVEYLPAPT (283 aa)). Residues 17 to 24 (AHVDAGKT), 88 to 92 (DTPGH), and 142 to 145 (NKMD) each bind GTP.

It belongs to the TRAFAC class translation factor GTPase superfamily. Classic translation factor GTPase family. EF-G/EF-2 subfamily.

The protein resides in the cytoplasm. Catalyzes the GTP-dependent ribosomal translocation step during translation elongation. During this step, the ribosome changes from the pre-translocational (PRE) to the post-translocational (POST) state as the newly formed A-site-bound peptidyl-tRNA and P-site-bound deacylated tRNA move to the P and E sites, respectively. Catalyzes the coordinated movement of the two tRNA molecules, the mRNA and conformational changes in the ribosome. This Saccharophagus degradans (strain 2-40 / ATCC 43961 / DSM 17024) protein is Elongation factor G 1.